Here is a 151-residue protein sequence, read N- to C-terminus: D-aminoacyl-tRNA deacylase (151 aa).

The Gly-cisPro motif, important for rejection of L-amino acids signature appears at 140–141; sequence GP.

It belongs to the DTD family. In terms of assembly, homodimer.

Its subcellular location is the cytoplasm. The catalysed reaction is glycyl-tRNA(Ala) + H2O = tRNA(Ala) + glycine + H(+). It carries out the reaction a D-aminoacyl-tRNA + H2O = a tRNA + a D-alpha-amino acid + H(+). In terms of biological role, an aminoacyl-tRNA editing enzyme that deacylates mischarged D-aminoacyl-tRNAs. Also deacylates mischarged glycyl-tRNA(Ala), protecting cells against glycine mischarging by AlaRS. Acts via tRNA-based rather than protein-based catalysis; rejects L-amino acids rather than detecting D-amino acids in the active site. By recycling D-aminoacyl-tRNA to D-amino acids and free tRNA molecules, this enzyme counteracts the toxicity associated with the formation of D-aminoacyl-tRNA entities in vivo and helps enforce protein L-homochirality. This Dictyostelium discoideum (Social amoeba) protein is D-aminoacyl-tRNA deacylase (dtd).